A 147-amino-acid chain; its full sequence is Myoglobin (147 aa).

The Globin domain occupies 2 to 141; the sequence is ADFDMVLKCW…IIADMEADYK (140 aa). Histidine 60 is a binding site for nitrite. An O2-binding site is contributed by histidine 60. Position 89 (histidine 89) interacts with heme b.

Belongs to the globin family. In terms of assembly, monomeric.

Its subcellular location is the cytoplasm. The protein localises to the sarcoplasm. It carries out the reaction Fe(III)-heme b-[protein] + nitric oxide + H2O = Fe(II)-heme b-[protein] + nitrite + 2 H(+). The catalysed reaction is H2O2 + AH2 = A + 2 H2O. In terms of biological role, monomeric heme protein which primary function is to store oxygen and facilitate its diffusion within muscle tissues. Reversibly binds oxygen through a pentacoordinated heme iron and enables its timely and efficient release as needed during periods of heightened demand. Depending on the oxidative conditions of tissues and cells, and in addition to its ability to bind oxygen, it also has a nitrite reductase activity whereby it regulates the production of bioactive nitric oxide. Under stress conditions, like hypoxia and anoxia, it also protects cells against reactive oxygen species thanks to its pseudoperoxidase activity. The polypeptide is Myoglobin (mb) (Pseudochaenichthys georgianus (South Georgia icefish)).